Here is a 609-residue protein sequence, read N- to C-terminus: Proline--tRNA ligase (609 aa).

It belongs to the class-II aminoacyl-tRNA synthetase family. ProS type 1 subfamily. As to quaternary structure, homodimer.

The protein localises to the cytoplasm. The catalysed reaction is tRNA(Pro) + L-proline + ATP = L-prolyl-tRNA(Pro) + AMP + diphosphate. Functionally, catalyzes the attachment of proline to tRNA(Pro) in a two-step reaction: proline is first activated by ATP to form Pro-AMP and then transferred to the acceptor end of tRNA(Pro). As ProRS can inadvertently accommodate and process non-cognate amino acids such as alanine and cysteine, to avoid such errors it has two additional distinct editing activities against alanine. One activity is designated as 'pretransfer' editing and involves the tRNA(Pro)-independent hydrolysis of activated Ala-AMP. The other activity is designated 'posttransfer' editing and involves deacylation of mischarged Ala-tRNA(Pro). The misacylated Cys-tRNA(Pro) is not edited by ProRS. In Synechococcus sp. (strain JA-3-3Ab) (Cyanobacteria bacterium Yellowstone A-Prime), this protein is Proline--tRNA ligase.